A 464-amino-acid chain; its full sequence is Cytochrome P450 85A1 (464 aa).

Residues 2 to 22 (AFFLIFLSSFFGLCIFCTALL) traverse the membrane as a helical segment. Residue Cys-414 coordinates heme.

It belongs to the cytochrome P450 family. Requires heme as cofactor. In terms of tissue distribution, expressed in sub-meristematic regions of shoot and root apexes, in zones undergoing lateral root formation, in fruits, and in all flower parts, with a high expression in young flower buds and at the joint in the pedicel.

The protein resides in the membrane. It catalyses the reaction 6-deoxocastasterone + reduced [NADPH--hemoprotein reductase] + O2 = 6alpha-hydroxycastasterone + oxidized [NADPH--hemoprotein reductase] + H2O + H(+). It carries out the reaction 6alpha-hydroxycastasterone + reduced [NADPH--hemoprotein reductase] + O2 = castasterone + oxidized [NADPH--hemoprotein reductase] + 2 H2O + H(+). The catalysed reaction is 6-deoxocastasterone + 2 reduced [NADPH--hemoprotein reductase] + 2 O2 = castasterone + 2 oxidized [NADPH--hemoprotein reductase] + 3 H2O + 2 H(+). The protein operates within plant hormone biosynthesis; brassinosteroid biosynthesis. Functionally, catalyzes the C6-oxidation step in brassinosteroids biosynthesis. Converts 6-deoxocastasterone (6-deoxoCS) to castasterone (CS). May also convert 6-deoxoteasterone (6-deoxoTE) to teasterone (TE), 3-dehydro-6-deoxoteasterone (6-deoxo3DT, 6-deoxo3DHT) to 3-dehydroteasterone (3DT, 3-DHT), and 6-deoxotyphasterol (6-deoxoTY) to typhasterol (TY), but not castasterone (CS) to brassinolide (BL). The chain is Cytochrome P450 85A1 from Solanum lycopersicum (Tomato).